Reading from the N-terminus, the 423-residue chain is Isovaleryl-CoA dehydrogenase, mitochondrial (423 aa).

The transit peptide at 1–29 (MATATRLLGWRVASWRMRPPPAGFVSQRA) directs the protein to the mitochondrion. An N6-acetyllysine; alternate mark is found at K55, K64, and K75. K55, K64, and K75 each carry N6-succinyllysine; alternate. Residues 162-171 (LAMSEPNAGS) and 195-197 (WIT) each bind FAD. S171 is a binding site for substrate. Position 219–220 (219–220 (SR)) interacts with substrate. Position 238 is an N6-acetyllysine (K238). K259 is modified (N6-acetyllysine; alternate). At K259 the chain carries N6-succinyllysine; alternate. Substrate is bound by residues Y274 and 281–284 (DLER). The active-site Proton acceptor is E283. R309 provides a ligand contact to FAD. K315 carries the post-translational modification N6-succinyllysine. FAD contacts are provided by residues Q320 and 377-381 (QCFGG). 404–405 (AG) is a binding site for substrate. 406–408 (TSE) is an FAD binding site.

It belongs to the acyl-CoA dehydrogenase family. Homotetramer. The cofactor is FAD.

The protein localises to the mitochondrion matrix. The catalysed reaction is 3-methylbutanoyl-CoA + oxidized [electron-transfer flavoprotein] + H(+) = 3-methylbut-2-enoyl-CoA + reduced [electron-transfer flavoprotein]. It carries out the reaction pentanoyl-CoA + oxidized [electron-transfer flavoprotein] + H(+) = (2E)-pentenoyl-CoA + reduced [electron-transfer flavoprotein]. The enzyme catalyses hexanoyl-CoA + oxidized [electron-transfer flavoprotein] + H(+) = (2E)-hexenoyl-CoA + reduced [electron-transfer flavoprotein]. It catalyses the reaction butanoyl-CoA + oxidized [electron-transfer flavoprotein] + H(+) = (2E)-butenoyl-CoA + reduced [electron-transfer flavoprotein]. Its pathway is amino-acid degradation; L-leucine degradation; (S)-3-hydroxy-3-methylglutaryl-CoA from 3-isovaleryl-CoA: step 1/3. In terms of biological role, catalyzes the conversion of isovaleryl-CoA/3-methylbutanoyl-CoA to 3-methylbut-2-enoyl-CoA as an intermediate step in the leucine (Leu) catabolic pathway. To a lesser extent, is also able to catalyze the oxidation of other saturated short-chain acyl-CoA thioesters as pentanoyl-CoA, hexenoyl-CoA and butenoyl-CoA. The sequence is that of Isovaleryl-CoA dehydrogenase, mitochondrial (IVD) from Pongo abelii (Sumatran orangutan).